Consider the following 1649-residue polypeptide: Formin-like protein 20 (1649 aa).

A Phosphatase tensin-type domain is found at 1-194 (MALFRRFFYK…QYISRRNLGS (194 aa)). Cys127 serves as the catalytic Phosphocysteine intermediate. One can recognise a C2 tensin-type domain in the interval 200-339 (DTPLLLDCLI…FKAEVLFSGA (140 aa)). 2 disordered regions span residues 416–774 (DCAS…PWKS) and 787–1245 (STSQ…QKKS). The span at 421 to 483 (DSNHKHDMHA…RRTVEAKEND (63 aa)) shows a compositional bias: basic and acidic residues. 2 stretches are compositionally biased toward polar residues: residues 500–513 (LESM…SLNK) and 585–597 (RINS…TTSL). Positions 598 to 616 (KDGKRATSPDGVIPKDAKT) are enriched in basic and acidic residues. Over residues 648–662 (SLPPASPHQAPPPLP) the composition is skewed to pro residues. Residues 665–678 (TSEAKTVLHSSQAV) are compositionally biased toward polar residues. Pro residues-rich tracts occupy residues 680-691 (SPPPPPPPPPLP), 701-711 (LPPPPPPPPPF), 722-732 (LPPPPPPPPPF), 743-752 (LPPPPPPPLP), and 795-804 (SPTPPPPPPA). Positions 809-820 (GQKSSDLQTSQL) are enriched in polar residues. Pro residues-rich tracts occupy residues 821 to 832 (PSPPPPPPPPPF), 843 to 854 (LPPPPPPPPPPF), and 865 to 874 (LPPPPPPPPW). Positions 878-890 (YASTFETHEACST) are enriched in polar residues. Pro residues-rich tracts occupy residues 893–904 (SPPPPPPPPPFS), 944–960 (PSPP…PPPF), and 968–1213 (SPPP…PPPM). An FH2 domain is found at 1237–1635 (FGSAAQKKSS…KALKEAEMEK (399 aa)).

The protein belongs to the formin-like family. Class-II subfamily.

This chain is Formin-like protein 20 (FH20), found in Arabidopsis thaliana (Mouse-ear cress).